The sequence spans 972 residues: Cycloisomaltooligosaccharide glucanotransferase (972 aa).

The signal sequence occupies residues 1–38 (MVRFMYALRKRRLSLLLAMSLLVMCVASVVSPPPQALA). 2 CBM6 domains span residues 421-546 (TRYE…LTLG) and 748-871 (DIYE…LDLD).

Belongs to the glycosyl hydrolase 66 family. As to quaternary structure, monomer.

It carries out the reaction cyclizes part of a (1-&gt;6)-alpha-D-glucan chain by formation of a (1-&gt;6)-alpha-D-glucosidic bond.. In terms of biological role, produces cycloisomaltooligosaccharide from dextran containing 7, 8 or 9 glucose units. The enzyme is specific for (1-&gt;6)-alpha-D-glucans (dextrans) and, without activity toward (1-&gt;4)-alpha-D-glucans, such as amylose. It also has no activity on oligosaccharides, such as amylopectin and pullulan, containing (1-&gt;6)-alpha-D-glucosidic linkages at branch points. This Niallia circulans (Bacillus circulans) protein is Cycloisomaltooligosaccharide glucanotransferase.